The chain runs to 150 residues: Ribosome maturation factor RimP (150 aa).

The protein belongs to the RimP family.

Its subcellular location is the cytoplasm. In terms of biological role, required for maturation of 30S ribosomal subunits. The polypeptide is Ribosome maturation factor RimP (Francisella philomiragia subsp. philomiragia (strain ATCC 25017 / CCUG 19701 / FSC 153 / O#319-036)).